A 124-amino-acid chain; its full sequence is Small ribosomal subunit protein bS6 (124 aa).

Residues 99 to 124 (PLPAPRIVPGSEPEPVQQQEAAAVEA) form a disordered region. Over residues 111 to 124 (PEPVQQQEAAAVEA) the composition is skewed to low complexity.

This sequence belongs to the bacterial ribosomal protein bS6 family.

Binds together with bS18 to 16S ribosomal RNA. In Prochlorococcus marinus (strain MIT 9313), this protein is Small ribosomal subunit protein bS6.